The following is a 101-amino-acid chain: Small ribosomal subunit protein uS14 (101 aa).

A compositionally biased stretch (basic and acidic residues) spans 1–10 (MAKKSSIEKN). The segment at 1–23 (MAKKSSIEKNNRRKKMTKNAAPK) is disordered. Residues 11 to 23 (NRRKKMTKNAAPK) are compositionally biased toward basic residues.

It belongs to the universal ribosomal protein uS14 family. As to quaternary structure, part of the 30S ribosomal subunit. Contacts proteins S3 and S10.

Its function is as follows. Binds 16S rRNA, required for the assembly of 30S particles and may also be responsible for determining the conformation of the 16S rRNA at the A site. In Rhodopseudomonas palustris (strain HaA2), this protein is Small ribosomal subunit protein uS14.